A 418-amino-acid chain; its full sequence is Creatine kinase U-type, mitochondrial (418 aa).

The transit peptide at 1–39 directs the protein to the mitochondrion; sequence MAGPFSRLLSARPGLKLLALAGAGSLAAGILLRPESVRA. The cardiolipin-binding stretch occupies residues 40–64; it reads ATGERRRLYPPSAEYPDLRKHNNCM. One can recognise a Phosphagen kinase N-terminal domain in the interval 46 to 132; sequence RLYPPSAEYP…FDPVIQERHN (87 aa). The residue at position 152 (S152) is a Phosphoserine. The 243-residue stretch at 159-401 folds into the Phosphagen kinase C-terminal domain; sequence YVLSSRVRTG…NYLIDCERRL (243 aa). 162–166 provides a ligand contact to ATP; the sequence is SSRVR. A Phosphoserine modification is found at S197. T214 carries the phosphothreonine modification. Position 225 (H225) interacts with ATP. A Phosphoserine modification is found at S233. ATP-binding positions include R270, R326, 354-359, and D369; that span reads RGTGGV. T356 bears the Phosphothreonine mark.

Belongs to the ATP:guanido phosphotransferase family. Exists as an octamer composed of four MTCK homodimers. In many tissues, with highest levels in brain gut and kidney. In the kidney localized primarily in the outer medulla in the thick ascending limb and distal convoluted tubule.

The protein localises to the mitochondrion inner membrane. It catalyses the reaction creatine + ATP = N-phosphocreatine + ADP + H(+). Its function is as follows. Reversibly catalyzes the transfer of phosphate between ATP and various phosphogens (e.g. creatine phosphate). Creatine kinase isoenzymes play a central role in energy transduction in tissues with large, fluctuating energy demands, such as skeletal muscle, heart, brain and spermatozoa. This is Creatine kinase U-type, mitochondrial (Ckmt1) from Rattus norvegicus (Rat).